Here is a 911-residue protein sequence, read N- to C-terminus: Alpha-actinin-4 (911 aa).

Residues 1-30 (MVDYHAASQSYQYGPSSAGNGAGGGGSMGD) are disordered. An actin-binding region spans residues 1–269 (MVDYHAASQS…YVSSFYHAFS (269 aa)). The interval 12-26 (QYGPSSAGNGAGGGG) is interaction with VCL. Tyr-31 is subject to Phosphotyrosine. Residues 40–61 (RDLLLDPAWEKQQRKTFTAWCN) form an interaction with VCL region. 2 Calponin-homology (CH) domains span residues 50–154 (KQQR…LRFA) and 163–269 (TSAK…HAFS). The LXXLL motif motif lies at 84-88 (LMLLL). The tract at residues 108 to 126 (KINNVNKALDFIASKGVKL) is interaction with VCL. At Lys-114 the chain carries N6-acetyllysine. The interval 177–192 (TAPYKNVNVQNFHISW) is polyphosphoinositide (PIP2)-binding. At Lys-214 the chain carries N6-acetyllysine. The residue at position 249 (Thr-249) is a Phosphothreonine. 4 Spectrin repeats span residues 293 to 403 (HLME…WLLN), 413 to 518 (HLAE…ALEK), 528 to 639 (QLHL…ALLE), and 649 to 752 (HLRR…EVEN). Residues Lys-592 and Lys-625 each carry the N6-acetyllysine modification. Position 696 is a phosphoserine (Ser-696). The interval 736 to 911 (WEQLLTTIAR…STALYGESDL (176 aa)) is mediates interaction with MICALL2. EF-hand domains follow at residues 765–800 (EQMQ…LGYD) and 806–841 (QGEA…ETTD). Asp-778 serves as a coordination point for Ca(2+). The residue at position 779 (Lys-779) is an N6-acetyllysine. Residues Asp-780 and Glu-789 each coordinate Ca(2+). Position 859 is an N6-acetyllysine (Lys-859). Ser-909 is subject to Phosphoserine.

This sequence belongs to the alpha-actinin family. In terms of assembly, homodimer; antiparallel. Identified in a IGF2BP1-dependent mRNP granule complex containing untranslated mRNAs. Component of the CART complex, at least composed of ACTN4, HGS/HRS, MYO5B and TRIM3. Binds TRIM3 at the N-terminus. Interacts with MAGI1. Interacts with PDLIM2. Identified in a complex with CASK, IQGAP1, MAGI2, NPHS1, SPTAN1 and SPTBN1. Interacts with MICALL2 (preferentially in opened conformation); stimulated by RAB13 activation. Interacts with PPARG and RARA. Binds to VCL; this interaction triggers VCL conformational changes. Interacts with SEPTIN14. Interacts with IGSF8.

It localises to the nucleus. It is found in the cytoplasm. The protein localises to the cell junction. Its subcellular location is the cytoskeleton. The protein resides in the stress fiber. It localises to the perinuclear region. In terms of biological role, F-actin cross-linking protein which is thought to anchor actin to a variety of intracellular structures. This is a bundling protein. Probably involved in vesicular trafficking via its association with the CART complex. The CART complex is necessary for efficient transferrin receptor recycling but not for EGFR degradation. Involved in tight junction assembly in epithelial cells probably through interaction with MICALL2. Links MICALL2 to the actin cytoskeleton and recruits it to the tight junctions. May also function as a transcriptional coactivator, stimulating transcription mediated by the nuclear hormone receptors PPARG and RARA. Association with IGSF8 regulates the immune synapse formation and is required for efficient T-cell activation. This Pongo abelii (Sumatran orangutan) protein is Alpha-actinin-4.